We begin with the raw amino-acid sequence, 523 residues long: Non-specific phospholipase C3 (523 aa).

A disordered region spans residues D44–A64. The segment covering R52–A64 has biased composition (polar residues).

The protein belongs to the bacterial phospholipase C family. As to expression, expressed in root tips, cotyledons, on leaf margins, stems, young anthers and funiculus.

It catalyses the reaction a 1-acyl-sn-glycero-3-phosphate + H2O = a 1-acyl-sn-glycerol + phosphate. Functionally, possesses specific phosphatase activity toward lysophosphatidic acid (LPA) in vitro. Does not show phospholipase C activity. May play a role in signal transduction and storage lipid synthesis. May be involved in brassinolide-mediated signaling in root development. This is Non-specific phospholipase C3 (NPC3) from Arabidopsis thaliana (Mouse-ear cress).